Reading from the N-terminus, the 141-residue chain is Putative antiporter subunit mnhB2 (141 aa).

4 helical membrane passes run 10 to 30 (TVTK…FFAG), 35 to 55 (GGGF…FLAF), 70 to 90 (KLMI…VFFG), and 116 to 136 (LFEL…MLAL).

This sequence belongs to the CPA3 antiporters (TC 2.A.63) subunit B family. In terms of assembly, may form a heterooligomeric complex that consists of seven subunits: mnhA2, mnhB2, mnhC2, mnhD2, mnhE2, mnhF2 and mnhG2.

Its subcellular location is the cell membrane. In Staphylococcus haemolyticus (strain JCSC1435), this protein is Putative antiporter subunit mnhB2 (mnhB2).